Here is a 309-residue protein sequence, read N- to C-terminus: Putative taste receptor type 2 member 36 (309 aa).

Methionine 1 is a topological domain (extracellular). A helical membrane pass occupies residues 2 to 22 (ICFLLIILSILVVFAFVLGNF). Residues 23–46 (SNGFIALVNVIDWVKRQKISSADQ) lie on the Cytoplasmic side of the membrane. A helical membrane pass occupies residues 47-67 (ILTALVVSRVGLLWVILLHWY). Residues 68–79 (SNVLNSALYSSE) lie on the Extracellular side of the membrane. Residues 80–100 (VIIFISNAWAIINHFSIWLAT) form a helical membrane-spanning segment. Residues 101–126 (SLSIFYLLKIVNFSRLIFHHLKRKAK) lie on the Cytoplasmic side of the membrane. Residues 127 to 147 (SVVLVIVLGPLVFLVCHLVMK) form a helical membrane-spanning segment. Topologically, residues 148-181 (HTYINVWTKEYEGNVTWKIKLRNAIHLSNLTVST) are extracellular. Asparagine 161 and asparagine 176 each carry an N-linked (GlcNAc...) asparagine glycan. Residues 182–202 (LANLIPFTLTLISFLLLIYSL) traverse the membrane as a helical segment. Residues 203–229 (CKHLKKMQLHGKGSQDPSTKVHIKALQ) are Cytoplasmic-facing. A helical transmembrane segment spans residues 230 to 250 (TVTSFLLLCAIYFLSMIISVC). The Extracellular portion of the chain corresponds to 251–259 (NFGRLEKQP). Residues 260–280 (VFMFCQAIIFSYPSTHPFILI) form a helical membrane-spanning segment. Residues 281–309 (LGNKKLKQIFLSVFWQMRYWVKGEKPSSP) are Cytoplasmic-facing.

It belongs to the G-protein coupled receptor T2R family.

The protein resides in the membrane. Functionally, putative taste receptor which may play a role in the perception of bitterness. The chain is Putative taste receptor type 2 member 36 from Homo sapiens (Human).